A 404-amino-acid chain; its full sequence is Sodium/glutamate symporter (404 aa).

Transmembrane regions (helical) follow at residues 5–25 (FSTY…YFLV), 33–53 (TFNI…LLIW), 69–89 (TTMM…SRLI), 95–115 (LVVF…IGIA), 161–181 (IAIA…GPVA), 219–239 (SLIE…YLDV), 245–265 (ALQL…RNIL), 277–297 (AIDV…LMSL), 307–327 (IDVL…AIFI), 338–358 (AVVL…TAIA), and 373–393 (AFLI…AALL).

The protein belongs to the glutamate:Na(+) symporter (ESS) (TC 2.A.27) family.

The protein resides in the cell inner membrane. Catalyzes the sodium-dependent transport of glutamate. This Haemophilus influenzae (strain ATCC 51907 / DSM 11121 / KW20 / Rd) protein is Sodium/glutamate symporter.